The sequence spans 436 residues: Trigger factor (436 aa).

The 86-residue stretch at 161 to 246 folds into the PPIase FKBP-type domain; the sequence is GDQVIVDFDG…VREVKEPTLP (86 aa).

It belongs to the FKBP-type PPIase family. Tig subfamily.

Its subcellular location is the cytoplasm. The catalysed reaction is [protein]-peptidylproline (omega=180) = [protein]-peptidylproline (omega=0). Functionally, involved in protein export. Acts as a chaperone by maintaining the newly synthesized protein in an open conformation. Functions as a peptidyl-prolyl cis-trans isomerase. This chain is Trigger factor, found in Thioalkalivibrio sulfidiphilus (strain HL-EbGR7).